The chain runs to 236 residues: MAGSGELKLLGVWSSPYAIRVRVVLNLKSLPYEYVEENLGDKSDLLLASNPVHKSVPVLLHAGRPVNESQVIVQYIDEVWPGGAGGRPSVMPSDPYERAVARFWAAYVDDKVRPAWLAILFGSKTEEERAAAVAQAVAALETLEGAFGECSKGKPFFGGDGVGFVDVVLGGYLGWFTAIDKLIGRRLIDPARTPALAAWEERFRATDAAKGVVPDDADKLLEFRQTLLRWSASKAK.

Positions 5-84 (GELKLLGVWS…YIDEVWPGGA (80 aa)) constitute a GST N-terminal domain. Glutathione is bound by residues serine 15, lysine 42, valine 56, and 68–69 (ES). The 135-residue stretch at 94–228 (DPYERAVARF…KLLEFRQTLL (135 aa)) folds into the GST C-terminal domain.

The protein belongs to the GST superfamily. Tau family. Expressed in seedling shoots and roots.

It carries out the reaction RX + glutathione = an S-substituted glutathione + a halide anion + H(+). Conjugation of reduced glutathione to a wide number of exogenous and endogenous hydrophobic electrophiles. In Oryza sativa subsp. japonica (Rice), this protein is Probable glutathione S-transferase GSTU6 (GSTU6).